A 560-amino-acid chain; its full sequence is Chaperonin GroEL 2 (560 aa).

ATP-binding positions include 29–32 (TLGP), 86–90 (DGTTT), G413, 478–480 (NAA), and D494.

The protein belongs to the chaperonin (HSP60) family. Forms a cylinder of 14 subunits composed of two heptameric rings stacked back-to-back. Interacts with the co-chaperonin GroES.

Its subcellular location is the cytoplasm. It catalyses the reaction ATP + H2O + a folded polypeptide = ADP + phosphate + an unfolded polypeptide.. In terms of biological role, together with its co-chaperonin GroES, plays an essential role in assisting protein folding. The GroEL-GroES system forms a nano-cage that allows encapsulation of the non-native substrate proteins and provides a physical environment optimized to promote and accelerate protein folding. The polypeptide is Chaperonin GroEL 2 (Trichormus variabilis (strain ATCC 29413 / PCC 7937) (Anabaena variabilis)).